A 317-amino-acid polypeptide reads, in one-letter code: L-lactate dehydrogenase (317 aa).

NAD(+)-binding positions include 16 to 17, Asp-38, Lys-43, Tyr-69, and 83 to 84; these read FV and GA. 2 residues coordinate substrate: Gln-86 and Arg-92. Residues Ser-105, 122-124, and Ser-147 contribute to the NAD(+) site; that span reads ATN. Residue 124–127 participates in substrate binding; sequence NPVD. Residue 152–155 coordinates substrate; it reads DTAR. Beta-D-fructose 1,6-bisphosphate-binding positions include Arg-157 and 169–172; that span reads QNVH. His-179 serves as the catalytic Proton acceptor. Phosphotyrosine is present on Tyr-224. A substrate-binding site is contributed by Thr-233.

This sequence belongs to the LDH/MDH superfamily. LDH family. As to quaternary structure, exists as a dimer and a tetramer (dimer of dimers). The conversion occurs via the binding of fructose 1,6-bisphosphate (FBP) to the dimer.

It is found in the cytoplasm. It carries out the reaction (S)-lactate + NAD(+) = pyruvate + NADH + H(+). Its pathway is fermentation; pyruvate fermentation to lactate; (S)-lactate from pyruvate: step 1/1. With respect to regulation, allosterically activated by fructose 1,6-bisphosphate (FBP). The improvement in affinity for substrate occurs in two steps; the binding of fructose 1,6-bisphosphate (FBP) to the dimer, and the dimer to tetramer conversion. Functionally, catalyzes the conversion of lactate to pyruvate. This is L-lactate dehydrogenase from Geobacillus stearothermophilus (Bacillus stearothermophilus).